Here is a 646-residue protein sequence, read N- to C-terminus: Cytochrome b translation regulator cbp8 (646 aa).

Component of a complex, at least composed of cbp7 and cbp8.

The protein resides in the mitochondrion. Its function is as follows. Translation factor for cob1/cytochrome b; plays a role in cob1 mRNA stabilization and required for correct folding of the protein. The protein is Cytochrome b translation regulator cbp8 of Schizosaccharomyces pombe (strain 972 / ATCC 24843) (Fission yeast).